The chain runs to 237 residues: Probable Bax inhibitor 1 (237 aa).

The Cytoplasmic segment spans residues 1–29 (MNVFDRNINFDSLFKFSQISHSTQVHLKN). A helical membrane pass occupies residues 30 to 50 (VYSSLAVCMFVAAAGSYVHVV). Residues 51–52 (TR) are Lumenal-facing. The helical transmembrane segment at 53-73 (LFQGGMLSVLGSLGMMFWLAM) threads the bilayer. Residues 74-86 (TPHNSETEKKRLA) lie on the Cytoplasmic side of the membrane. Residues 87-107 (ILAGFAFLTGVGLCPTLDFVI) form a helical membrane-spanning segment. Over 108–112 (AINPS) the chain is Lumenal. The helical transmembrane segment at 113–133 (IIVTAFLGTSVIFVCFTLSAL) threads the bilayer. The Cytoplasmic portion of the chain corresponds to 134-139 (YAKRRS). Residues 140 to 160 (YLFLGGTLMSGLSILFLMSMM) traverse the membrane as a helical segment. At 161 to 166 (NMFFGS) the chain is on the lumenal side. A helical membrane pass occupies residues 167–187 (VMLFKAHMYLGLLIMCGFVLX). The Cytoplasmic portion of the chain corresponds to 188-206 (DTQLIIEKAENGDKDYVWH). An intramembrane region (helical) is located at residues 207–227 (SVDLFLDFITIFRKLMVILAL). At 228 to 237 (NDKDKKKEKK) the chain is on the cytoplasmic side.

Belongs to the BI1 family. In terms of tissue distribution, highly abundant in testis.

Its subcellular location is the endoplasmic reticulum membrane. In terms of biological role, suppressor of apoptosis. Modulates unfolded protein response signaling. Modulate ER calcium homeostasis by acting as a calcium-leak channel. The sequence is that of Probable Bax inhibitor 1 (tmbim6) from Paralichthys olivaceus (Bastard halibut).